We begin with the raw amino-acid sequence, 168 residues long: Mesencephalic astrocyte-derived neurotrophic factor homolog (168 aa).

The signal sequence occupies residues 1-17 (MSRLVLLISLVIVVASA). Cystine bridges form between Cys-22–Cys-109, Cys-25–Cys-97, Cys-55–Cys-66, and Cys-143–Cys-146.

Belongs to the ARMET family. Expressed in the intestine, spermatheca and nervous system. Expressed in the hypoderm. Expressed in structures of the excretory system. Not expressed in the male gonad.

Its subcellular location is the secreted. The protein resides in the endoplasmic reticulum lumen. Inhibits endoplasmic reticulum (ER) stress response. Retained in the ER under normal conditions and is up-regulated and secreted by the ER in response to ER stress and hypoxia. Following secretion by the ER, directly binds to 3-O-sulfogalactosylceramide, a lipid sulfatide in the outer cell membrane of target cells. Sulfatide binding promotes its cellular uptake by endocytosis, and is required for its role in alleviating ER stress under ER stress conditions. Has a neuroprotective role, ensuring survival of dopaminergic neurons during normal growth. The polypeptide is Mesencephalic astrocyte-derived neurotrophic factor homolog (Caenorhabditis elegans).